Consider the following 82-residue polypeptide: Putative membrane protein insertion efficiency factor (82 aa).

It belongs to the UPF0161 family.

Its subcellular location is the cell inner membrane. In terms of biological role, could be involved in insertion of integral membrane proteins into the membrane. The chain is Putative membrane protein insertion efficiency factor from Rickettsia peacockii (strain Rustic).